A 393-amino-acid chain; its full sequence is Sulfite oxidase (393 aa).

The disordered stretch occupies residues 1–27; that stretch reads MPGIRGPSEYSQEPPRHPSLKVNAKEP. The interval 10–242 is moco domain; it reads YSQEPPRHPS…QGFFMQKDYK (233 aa). Mo-molybdopterin contacts are provided by residues 49-53, Cys98, 159-161, His202, Arg207, and 218-220; these read YKRNH, SVD, and SVK. Residues 243-393 are homodimerization; sequence MFPPSVNWDN…VLLRLGHSNL (151 aa). Residues 391 to 393 carry the Microbody targeting signal motif; sequence SNL.

In terms of assembly, predominantly monomer; also homodimer. It depends on Mo-molybdopterin as a cofactor.

The protein resides in the peroxisome. The enzyme catalyses sulfite + O2 + H2O = sulfate + H2O2. The protein operates within energy metabolism; sulfur metabolism. Probably involved in sulfite oxidative detoxification. The protein is Sulfite oxidase (SOX) of Arabidopsis thaliana (Mouse-ear cress).